A 640-amino-acid chain; its full sequence is 1-deoxy-D-xylulose-5-phosphate synthase (640 aa).

Thiamine diphosphate is bound by residues H75 and 117–119 (GHA). D146 lines the Mg(2+) pocket. Residues 147 to 148 (AA), N175, and E370 each bind thiamine diphosphate. N175 contributes to the Mg(2+) binding site.

The protein belongs to the transketolase family. DXPS subfamily. Homodimer. Mg(2+) serves as cofactor. Requires thiamine diphosphate as cofactor.

It carries out the reaction D-glyceraldehyde 3-phosphate + pyruvate + H(+) = 1-deoxy-D-xylulose 5-phosphate + CO2. Its pathway is metabolic intermediate biosynthesis; 1-deoxy-D-xylulose 5-phosphate biosynthesis; 1-deoxy-D-xylulose 5-phosphate from D-glyceraldehyde 3-phosphate and pyruvate: step 1/1. In terms of biological role, catalyzes the acyloin condensation reaction between C atoms 2 and 3 of pyruvate and glyceraldehyde 3-phosphate to yield 1-deoxy-D-xylulose-5-phosphate (DXP). The polypeptide is 1-deoxy-D-xylulose-5-phosphate synthase (Chlamydia trachomatis serovar L2 (strain ATCC VR-902B / DSM 19102 / 434/Bu)).